The sequence spans 261 residues: Cytochrome c oxidase subunit 3 (261 aa).

Over 1–15 the chain is Mitochondrial matrix; the sequence is MTHQTHAYHMVNPSP. A helical membrane pass occupies residues 16 to 34; it reads WPLTGALSALLMSSGLTMW. The Mitochondrial intermembrane portion of the chain corresponds to 35–40; it reads FHFNSL. Residues 41-66 traverse the membrane as a helical segment; it reads ILLTTGLVTNILTMYQWWRDVIREST. Residues 67 to 72 lie on the Mitochondrial matrix side of the membrane; that stretch reads FQGHHT. Residues 73–105 traverse the membrane as a helical segment; the sequence is PVVQKGLRYGMVLFIISEVLFFTGFFWAFYHSS. At 106–128 the chain is on the mitochondrial intermembrane side; it reads LAPTPELGGCWPPTGINPLNPLE. Residues 129-152 traverse the membrane as a helical segment; sequence VPLLNTSVLLASGVSITWAHHSLM. Residues 153 to 155 are Mitochondrial matrix-facing; that stretch reads EGN. The chain crosses the membrane as a helical span at residues 156 to 183; that stretch reads RKQMLQALFITIALGVYFTLLQASEYHE. Residues 184–190 are Mitochondrial intermembrane-facing; that stretch reads ASFTISD. A helical transmembrane segment spans residues 191–223; the sequence is GVYGSTFFVATGFHGLHVIIGSTFLIVCFLRQL. The Mitochondrial matrix portion of the chain corresponds to 224-232; the sequence is KFHFTSDHH. Residues 233 to 256 traverse the membrane as a helical segment; that stretch reads FGFEAAAWYWHFVDVVWLFLYVSI. Topologically, residues 257–261 are mitochondrial intermembrane; it reads YWWGS.

It belongs to the cytochrome c oxidase subunit 3 family. Component of the cytochrome c oxidase (complex IV, CIV), a multisubunit enzyme composed of 14 subunits. The complex is composed of a catalytic core of 3 subunits MT-CO1, MT-CO2 and MT-CO3, encoded in the mitochondrial DNA, and 11 supernumerary subunits COX4I, COX5A, COX5B, COX6A, COX6B, COX6C, COX7A, COX7B, COX7C, COX8 and NDUFA4, which are encoded in the nuclear genome. The complex exists as a monomer or a dimer and forms supercomplexes (SCs) in the inner mitochondrial membrane with NADH-ubiquinone oxidoreductase (complex I, CI) and ubiquinol-cytochrome c oxidoreductase (cytochrome b-c1 complex, complex III, CIII), resulting in different assemblies (supercomplex SCI(1)III(2)IV(1) and megacomplex MCI(2)III(2)IV(2)).

The protein localises to the mitochondrion inner membrane. The enzyme catalyses 4 Fe(II)-[cytochrome c] + O2 + 8 H(+)(in) = 4 Fe(III)-[cytochrome c] + 2 H2O + 4 H(+)(out). Component of the cytochrome c oxidase, the last enzyme in the mitochondrial electron transport chain which drives oxidative phosphorylation. The respiratory chain contains 3 multisubunit complexes succinate dehydrogenase (complex II, CII), ubiquinol-cytochrome c oxidoreductase (cytochrome b-c1 complex, complex III, CIII) and cytochrome c oxidase (complex IV, CIV), that cooperate to transfer electrons derived from NADH and succinate to molecular oxygen, creating an electrochemical gradient over the inner membrane that drives transmembrane transport and the ATP synthase. Cytochrome c oxidase is the component of the respiratory chain that catalyzes the reduction of oxygen to water. Electrons originating from reduced cytochrome c in the intermembrane space (IMS) are transferred via the dinuclear copper A center (CU(A)) of subunit 2 and heme A of subunit 1 to the active site in subunit 1, a binuclear center (BNC) formed by heme A3 and copper B (CU(B)). The BNC reduces molecular oxygen to 2 water molecules using 4 electrons from cytochrome c in the IMS and 4 protons from the mitochondrial matrix. This chain is Cytochrome c oxidase subunit 3 (MT-CO3), found in Hippopotamus amphibius (Hippopotamus).